Here is an 85-residue protein sequence, read N- to C-terminus: Small ribosomal subunit protein bS18 (85 aa).

The protein belongs to the bacterial ribosomal protein bS18 family. In terms of assembly, part of the 30S ribosomal subunit. Forms a tight heterodimer with protein bS6.

Functionally, binds as a heterodimer with protein bS6 to the central domain of the 16S rRNA, where it helps stabilize the platform of the 30S subunit. The polypeptide is Small ribosomal subunit protein bS18 (Hamiltonella defensa subsp. Acyrthosiphon pisum (strain 5AT)).